Consider the following 414-residue polypeptide: MKSSSSIFRETSEKKSERWMMMNIGRFSPFFLSSFCITLFFTGFFVYQNPFKSIADQNVLSFQPQIDPECDLFKGHWVPDKRGSLYTNSSCATIPDSKNCIKQGRPDKDFLFWRWKPDGCDLPRFNPKAFLSMVRGKKMNFIGDSVARNHMESLLCLLSMEETPKDIYKDGEDRNRIWYFPKHDFTLSTSWTKFLVEERERRDSNNTGTGLFDLDIGKIDEGWFNGLPNTDIAIVSAAHWFFRPIFIHRGDETLGCIYCNLPNMTQISPEEGFKLVYSAVLRQINECEMCKKDLVTVLRTISPAHFENGTWDTGGTCSRTSPFGENKIDLQSNEMKIRKSQIEQLEGITKRGNKAKKFAVLDVTRVMQMRPDGHPNGYWGNKWMKGYNDCVHWCLPGPIDAWNDFLMAIIRQLR.

The Cytoplasmic portion of the chain corresponds to 1–26 (MKSSSSIFRETSEKKSERWMMMNIGR). The chain crosses the membrane as a helical; Signal-anchor for type II membrane protein span at residues 27-47 (FSPFFLSSFCITLFFTGFFVY). Residues 48-414 (QNPFKSIADQ…FLMAIIRQLR (367 aa)) are Lumenal-facing. 4 cysteine pairs are disulfide-bonded: Cys70–Cys120, Cys91–Cys156, Cys100–Cys394, and Cys317–Cys390. A glycan (N-linked (GlcNAc...) asparagine) is linked at Asn88. The GDS motif signature appears at 143–145 (GDS). Catalysis depends on Ser145, which acts as the Nucleophile. Residues Asn205, Asn263, and Asn308 are each glycosylated (N-linked (GlcNAc...) asparagine). Asp389 (proton donor) is an active-site residue. Residues 389-392 (DCVH) carry the DXXH motif motif. His392 serves as the catalytic Proton acceptor.

This sequence belongs to the PC-esterase family. TBL subfamily.

It localises to the membrane. Xyloglucan acetyltransferase that catalyzes the acetylation of fucosylated Gal residues on xyloglucan side chains. Predominantly catalyze 6-O-monoacetylation of Gal residues in the Fuc-Gal-Xyl trisaccharide side chains of xyloglucan oligomers. Involved in xyloglucan specific O-acetylation in seeds. This chain is xyloglucan O-acetyltransferase 2, found in Arabidopsis thaliana (Mouse-ear cress).